The chain runs to 1612 residues: Phospholipid-transporting ATPase DNF2 (1612 aa).

Residues 1 to 74 form a disordered region; the sequence is MSSPSKPTSP…MKDISTPDLS (74 aa). At 1 to 252 the chain is on the cytoplasmic side; sequence MSSPSKPTSP…TFFPKNILFQ (252 aa). Residues 20 to 30 are compositionally biased toward low complexity; the sequence is GSASNGLSSMS. A Phosphothreonine modification is found at T70. At S85 the chain carries Phosphoserine. Residues 253-273 form a helical membrane-spanning segment; the sequence is FHNFANIYFLILLILGAFQIF. The segment at 272–279 is involved in phosphatidylcholine substrate selection; sequence IFGVTNPG. Over 274–277 the chain is Extracellular; sequence GVTN. A helical membrane pass occupies residues 278-298; it reads PGFASVPLIVIVIITAIKDGI. Residues 299 to 598 are Cytoplasmic-facing; it reads EDSRRTVLDL…RISRELNFSV (300 aa). Residues 364–373 show a composition bias toward basic and acidic residues; it reads KLQKKREELR. The tract at residues 364–384 is disordered; it reads KLQKKREELRRKRNSRSFGPR. Phosphoserine occurs at positions 389, 392, 396, and 403. Residue Y406 is modified to Phosphotyrosine. The chain crosses the membrane as a helical span at residues 599–619; it reads ILNFVLLFILCFTAGIVNGVY. The Extracellular portion of the chain corresponds to 620–639; that stretch reads YKQKPRSRDYFEFGTIGGSA. Residues 631 to 635 form an involved in phosphatidylcholine substrate selection region; it reads EFGTI. The helical transmembrane segment at 640 to 660 threads the bilayer; that stretch reads STNGFVSFWVAVILYQSLVPI. Residues 661–1231 lie on the Cytoplasmic side of the membrane; it reads SLYISVEIIK…WCYKRLAEMI (571 aa). The active-site 4-aspartylphosphate intermediate is the D712. The ATP site is built by D712, K713, and T714. A Mg(2+)-binding site is contributed by D712. Position 714 (T714) interacts with Mg(2+). Position 782 is a phosphothreonine (T782). 5 residues coordinate ATP: E846, F887, S889, K892, and K916. Residue K938 forms a Glycyl lysine isopeptide (Lys-Gly) (interchain with G-Cter in ubiquitin) linkage. 7 residues coordinate ATP: R952, T953, T1032, G1033, D1034, R1147, and K1153. D1173 is a binding site for Mg(2+). Residues N1176 and D1177 each contribute to the ATP site. D1177 provides a ligand contact to Mg(2+). The helical transmembrane segment at 1232–1252 threads the bilayer; that stretch reads PQFFYKNVIFTLSLFWYGIYN. Topologically, residues 1253-1262 are extracellular; sequence NFDGSYLFEY. Residues 1263-1283 form a helical membrane-spanning segment; sequence TYLTFYNLAFTSVPVILLAVL. Over 1284–1313 the chain is Cytoplasmic; the sequence is DQDVSDTVSMLVPQLYRVGILRKEWNQTKF. The chain crosses the membrane as a helical span at residues 1314-1334; sequence LWYMLDGVYQSVICFFFPYLA. Over 1335 to 1350 the chain is Extracellular; that stretch reads YHKNMVVTENGLGLDH. A helical membrane pass occupies residues 1351-1371; that stretch reads RYFVGVFVTAIAVTSCNFYVF. Topologically, residues 1372–1377 are cytoplasmic; it reads MEQYRW. A helical membrane pass occupies residues 1378–1398; it reads DWFCGLFICLSLAVFYGWTGI. Topologically, residues 1399–1418 are extracellular; the sequence is WTSSSSSNEFYKGAARVFAQ. A helical transmembrane segment spans residues 1419–1439; sequence PAYWAVLFVGVLFCLLPRFTI. R1436 contributes to the a 1,2-diacyl-sn-glycero-3-phospho-L-serine binding site. At 1440–1612 the chain is on the cytoplasmic side; that stretch reads DCIRKIFYPK…TLLSQRSRDR (173 aa). Residue S1542 is modified to Phosphoserine. The disordered stretch occupies residues 1544 to 1563; that stretch reads VTTTNNLPRRSMASARGNKL. Phosphoserine is present on S1592.

The protein belongs to the cation transport ATPase (P-type) (TC 3.A.3) family. Type IV subfamily. Component of a flippase complex consisting of DNF1 and LEM3. Interacts with LEM3; the interaction is direct. The cofactor is Mg(2+). In terms of processing, phosphorylated by FPK1 and KIN82.

The protein resides in the cell membrane. The catalysed reaction is ATP + H2O + phospholipidSide 1 = ADP + phosphate + phospholipidSide 2.. It catalyses the reaction a 1,2-diacyl-sn-glycero-3-phosphoethanolamine(out) + ATP + H2O = a 1,2-diacyl-sn-glycero-3-phosphoethanolamine(in) + ADP + phosphate + H(+). It carries out the reaction a 1,2-diacyl-sn-glycero-3-phosphocholine(out) + ATP + H2O = a 1,2-diacyl-sn-glycero-3-phosphocholine(in) + ADP + phosphate + H(+). The enzyme catalyses a beta-D-glucosyl-(1&lt;-&gt;1')-N-acylsphing-4-enine(out) + ATP + H2O = a beta-D-glucosyl-(1&lt;-&gt;1')-N-acylsphing-4-enine(in) + ADP + phosphate + H(+). The catalysed reaction is a 1,2-diacyl-sn-glycero-3-phospho-L-serine(out) + ATP + H2O = a 1,2-diacyl-sn-glycero-3-phospho-L-serine(in) + ADP + phosphate + H(+). With respect to regulation, phosphatidylcholine flippase activity is inhibited by glucosylsphingosine, lactosylsphingosine, lysophosphatidylcholine and to a lesser degree sphingosine-1-phosphate and lysosphingomyelin. Glucosylceramide flippase activity is inhibited by lysophosphatidylcholine, glucosylsphingosine and to a lesser degree lactosylsphingosine whereas lysosphingomyelin has a stimulatory effect at low concentrations. Functionally, catalytic component of a P4-ATPase flippase complex which catalyzes the hydrolysis of ATP coupled to the transport of glucosylceramide, phosphatidylcholine, phosphatidylethanolamine, and small amounts of phosphatidylserine from the lumenal to the cytosolic leaflet of the cell membrane and ensures the maintenance of asymmetric distribution of phospholipids. Does not appear to transport sphingomyelin, inositol phosphoceramide or phosphatidic acid. Required for efficient endocytosis. Required for protein transport from Golgi to vacuoles. The protein is Phospholipid-transporting ATPase DNF2 (DNF2) of Saccharomyces cerevisiae (strain ATCC 204508 / S288c) (Baker's yeast).